Reading from the N-terminus, the 442-residue chain is tRNA-2-methylthio-N(6)-dimethylallyladenosine synthase (442 aa).

One can recognise an MTTase N-terminal domain in the interval 2-120; it reads KKVFIRTFGC…LPKMIVDKET (119 aa). [4Fe-4S] cluster is bound by residues Cys-11, Cys-49, Cys-83, Cys-157, Cys-161, and Cys-164. The Radical SAM core domain maps to 143–375; the sequence is RVEGGAAFVS…NEVIEAETAR (233 aa). The TRAM domain maps to 378-441; that stretch reads QTMIGTVQRC…TFSLRGKVVE (64 aa).

It belongs to the methylthiotransferase family. MiaB subfamily. As to quaternary structure, monomer. [4Fe-4S] cluster serves as cofactor.

Its subcellular location is the cytoplasm. The catalysed reaction is N(6)-dimethylallyladenosine(37) in tRNA + (sulfur carrier)-SH + AH2 + 2 S-adenosyl-L-methionine = 2-methylsulfanyl-N(6)-dimethylallyladenosine(37) in tRNA + (sulfur carrier)-H + 5'-deoxyadenosine + L-methionine + A + S-adenosyl-L-homocysteine + 2 H(+). Catalyzes the methylthiolation of N6-(dimethylallyl)adenosine (i(6)A), leading to the formation of 2-methylthio-N6-(dimethylallyl)adenosine (ms(2)i(6)A) at position 37 in tRNAs that read codons beginning with uridine. The polypeptide is tRNA-2-methylthio-N(6)-dimethylallyladenosine synthase (Neisseria meningitidis serogroup C / serotype 2a (strain ATCC 700532 / DSM 15464 / FAM18)).